Reading from the N-terminus, the 487-residue chain is Betaine aldehyde dehydrogenase (487 aa).

K(+)-binding residues include I27 and D93. 149 to 151 (GAW) contacts NAD(+). K161 (charge relay system) is an active-site residue. NAD(+) is bound by residues 175–178 (KPSE) and 228–231 (SVPT). L243 lines the K(+) pocket. The active-site Proton acceptor is E249. NAD(+)-binding residues include G251, C283, and E384. The Nucleophile role is filled by C283. C283 carries the cysteine sulfenic acid (-SOH) modification. Residues K454 and G457 each coordinate K(+). Catalysis depends on E461, which acts as the Charge relay system.

It belongs to the aldehyde dehydrogenase family. As to quaternary structure, dimer of dimers. It depends on K(+) as a cofactor.

It carries out the reaction betaine aldehyde + NAD(+) + H2O = glycine betaine + NADH + 2 H(+). Its pathway is amine and polyamine biosynthesis; betaine biosynthesis via choline pathway; betaine from betaine aldehyde: step 1/1. In terms of biological role, involved in the biosynthesis of the osmoprotectant glycine betaine. Catalyzes the irreversible oxidation of betaine aldehyde to the corresponding acid. In Brucella canis (strain ATCC 23365 / NCTC 10854 / RM-666), this protein is Betaine aldehyde dehydrogenase.